Reading from the N-terminus, the 603-residue chain is DNA mismatch repair protein MutL (603 aa).

Basic and acidic residues predominate over residues 336-346 (EVSKKQKEQQK). Disordered regions lie at residues 336–355 (EVSK…MSFE) and 361–384 (KETP…DTSR).

Belongs to the DNA mismatch repair MutL/HexB family.

In terms of biological role, this protein is involved in the repair of mismatches in DNA. It is required for dam-dependent methyl-directed DNA mismatch repair. May act as a 'molecular matchmaker', a protein that promotes the formation of a stable complex between two or more DNA-binding proteins in an ATP-dependent manner without itself being part of a final effector complex. The sequence is that of DNA mismatch repair protein MutL from Listeria welshimeri serovar 6b (strain ATCC 35897 / DSM 20650 / CCUG 15529 / CIP 8149 / NCTC 11857 / SLCC 5334 / V8).